A 313-amino-acid polypeptide reads, in one-letter code: Ribosomal RNA small subunit methyltransferase H (313 aa).

S-adenosyl-L-methionine is bound by residues 34 to 36 (GGH), Asp55, Phe82, Asp103, and Gln110.

This sequence belongs to the methyltransferase superfamily. RsmH family.

The protein localises to the cytoplasm. It catalyses the reaction cytidine(1402) in 16S rRNA + S-adenosyl-L-methionine = N(4)-methylcytidine(1402) in 16S rRNA + S-adenosyl-L-homocysteine + H(+). Functionally, specifically methylates the N4 position of cytidine in position 1402 (C1402) of 16S rRNA. The polypeptide is Ribosomal RNA small subunit methyltransferase H (Pelobacter propionicus (strain DSM 2379 / NBRC 103807 / OttBd1)).